The primary structure comprises 645 residues: Cyclic nucleotide-gated channel rod photoreceptor subunit alpha (645 aa).

Over 1-121 (MKVGVIETHH…PAGNMYYNWL (121 aa)) the chain is Cytoplasmic. Residues 53–100 (NNNSNKDEEKKKKKEKKSKSENKKDGERQKNKEKKEKHKNKDKKKGKE) form a disordered region. The segment covering 70 to 86 (SKSENKKDGERQKNKEK) has biased composition (basic and acidic residues). A compositionally biased stretch (basic residues) spans 87 to 96 (KEKHKNKDKK). A helical membrane pass occupies residues 122-143 (FCITMPVMYNWTMIIARACFDE). Over 144–153 (LQNDYLAVWF) the chain is Extracellular. A helical membrane pass occupies residues 154–174 (IVDYVSDVIYIADMFVRTRTG). Residues 175-199 (YLEQGLLVKEEQKLKEKYKSSLQFK) lie on the Cytoplasmic side of the membrane. Residues 200-218 (LDFLSIIPTDLLYFKLGLN) form a helical membrane-spanning segment. Residues 219–223 (YPELR) lie on the Extracellular side of the membrane. A helical membrane pass occupies residues 224-242 (INRLLRVARMFEFFQRTET). Residues 243–249 (RTNYPNI) are Cytoplasmic-facing. The chain crosses the membrane as a helical span at residues 250 to 273 (FRISNLVMYIVIIIHWNACVYYSI). The Extracellular portion of the chain corresponds to 274–296 (SKAIGFGADTWVYPNTSHPEFAR). The next 2 helical transmembrane spans lie at 297-331 (LTRKYVYSLYWSTLTLTTIGETPPPVRDSEYFFVV) and 332-356 (VDFLVGVLIFATIVGNVGSMISNMN). At 357–645 (AARAEFQAKI…TDKPGVTKTE (289 aa)) the chain is on the cytoplasmic side. 3',5'-cyclic GMP-binding positions include 439–561 (LLVE…DGLL), glutamate 498, and arginine 513.

The protein belongs to the cyclic nucleotide-gated cation channel (TC 1.A.1.5) family.

It localises to the membrane. Visual signal transduction is mediated by a G-protein coupled cascade using cGMP as second messenger. This protein can be activated by cGMP which leads to an opening of the cation channel and thereby causing a depolarization of rod photoreceptors. This is Cyclic nucleotide-gated channel rod photoreceptor subunit alpha from Gallus gallus (Chicken).